The sequence spans 458 residues: 5'-adenylylsulfate reductase 3, chloroplastic (458 aa).

The interval 1-24 (MALAINVSSSSSSAISSSSFPSSD) is disordered. A chloroplast-targeting transit peptide spans 1-69 (MALAINVSSS…VQSITKESIV (69 aa)). Low complexity predominate over residues 8–23 (SSSSSSAISSSSFPSS). Residues 70–319 (ASEVTEKLDV…KAKECGLHKG (250 aa)) form a reductase domain region. The region spanning 337–458 (ASVADIFNSE…SLTSFLNLVR (122 aa)) is the Thioredoxin domain. Active-site nucleophile residues include Cys-378 and Cys-381. A disulfide bridge links Cys-378 with Cys-381.

The protein belongs to the APS reductase family. The cofactor is [4Fe-4S] cluster. As to expression, leaves, roots and stem.

It is found in the plastid. The protein localises to the chloroplast. It catalyses the reaction glutathione disulfide + sulfite + AMP + 2 H(+) = adenosine 5'-phosphosulfate + 2 glutathione. Stimulated by sodium sulfate &gt; ammonium sulfate. In terms of biological role, reduces sulfate for Cys biosynthesis. Substrate preference is adenosine-5'-phosphosulfate (APS) &gt;&gt; 3'-phosphoadenosine-5'-phosphosulfate (PAPS). Uses glutathione or DTT as source of protons. In Arabidopsis thaliana (Mouse-ear cress), this protein is 5'-adenylylsulfate reductase 3, chloroplastic (APR3).